Consider the following 62-residue polypeptide: Large ribosomal subunit protein bL28 (62 aa).

The protein belongs to the bacterial ribosomal protein bL28 family.

The chain is Large ribosomal subunit protein bL28 from Onion yellows phytoplasma (strain OY-M).